Consider the following 683-residue polypeptide: DNA polymerase alpha-associated DNA helicase A (683 aa).

Residue G229–T236 coordinates ATP.

It belongs to the DNA2/NAM7 helicase family. As to quaternary structure, associates with the hexameric DNA polymerase alpha.

The protein resides in the cytoplasm. It localises to the nucleus. The enzyme catalyses ATP + H2O = ADP + phosphate + H(+). DNA polymerase alpha-associated DNA helicase which may be involved in DNA replication. This chain is DNA polymerase alpha-associated DNA helicase A (HCS1), found in Saccharomyces cerevisiae (strain ATCC 204508 / S288c) (Baker's yeast).